The chain runs to 139 residues: Putative pre-16S rRNA nuclease (139 aa).

The protein belongs to the YqgF nuclease family.

It localises to the cytoplasm. In terms of biological role, could be a nuclease involved in processing of the 5'-end of pre-16S rRNA. This Streptococcus pyogenes serotype M3 (strain ATCC BAA-595 / MGAS315) protein is Putative pre-16S rRNA nuclease.